Reading from the N-terminus, the 217-residue chain is Adenylate kinase (217 aa).

Residue 10 to 15 (GIGKGT) participates in ATP binding. The interval 30 to 59 (ATGDIFRKNFQENTPLGKESKKFINKGLLV) is NMP. Residues Thr-31, Arg-36, 57 to 59 (LLV), 85 to 88 (GFPR), and Gln-92 contribute to the AMP site. Positions 126-163 (GRRICSHCGKVYHLDNLPPKIEGICDKDQKKLIQREDD) are LID. Arg-127 is a binding site for ATP. The Zn(2+) site is built by Cys-130 and Cys-133. 136–137 (VY) provides a ligand contact to ATP. 2 residues coordinate Zn(2+): Cys-150 and Asp-153. Arg-160 and Arg-171 together coordinate AMP. An ATP-binding site is contributed by Gln-199.

Belongs to the adenylate kinase family. In terms of assembly, monomer.

The protein resides in the cytoplasm. It catalyses the reaction AMP + ATP = 2 ADP. Its pathway is purine metabolism; AMP biosynthesis via salvage pathway; AMP from ADP: step 1/1. Its function is as follows. Catalyzes the reversible transfer of the terminal phosphate group between ATP and AMP. Plays an important role in cellular energy homeostasis and in adenine nucleotide metabolism. This Phytoplasma australiense protein is Adenylate kinase.